The sequence spans 433 residues: Hps1-dma1 cluster O-methyltransferase (433 aa).

A disordered region spans residues Asn36 to Pro55. Asp285 contributes to the S-adenosyl-L-methionine binding site. His331 serves as the catalytic Proton acceptor.

This sequence belongs to the class I-like SAM-binding methyltransferase superfamily. Cation-independent O-methyltransferase family. COMT subfamily.

The protein operates within secondary metabolite biosynthesis. Its function is as follows. O-methyltransferase; part of the hps1-dma1 gene cluster that probably mediates the biosynthesis a derivative of cyclopiazonic acid (CPA). The hybrid polyketide synthase-nonribosomal peptide synthetase (PKS-NRPS) nps1 might incorporates acetyl-CoA, malonyl-CoA, and tryptophan (Trp) and utilizes a C-terminal redox-incompetent reductase domain to make and release the tryptophan tetramic acid, cyclo-acetoacetyl-L-tryptophan (c-AATrp), as the first intermediate in the pathway. In addition, the cluster also includes the tryptophan dimethylallyltransferase dma1, the FAD-dependent oxidoreductase toxD, the cytochrome P450 monooxygenase cyp3.1 and the methyltransferase DOTSEDRAFT_139328; the latter 2 being not present in all CPA-producing fungi but involved in additional modifications that occur in biosynthesis the of a range of CPA and CPA-like products. Further studies are required to clarify whether the CPA-like hps1-dma1 cluster is functional or a non-functional relic reflecting evolution of D.septosporum. The polypeptide is Hps1-dma1 cluster O-methyltransferase (Dothistroma septosporum (strain NZE10 / CBS 128990) (Red band needle blight fungus)).